A 350-amino-acid polypeptide reads, in one-letter code: Protein pelota homolog (350 aa).

Belongs to the eukaryotic release factor 1 family. Pelota subfamily. As to quaternary structure, monomer. A divalent metal cation serves as cofactor.

It localises to the cytoplasm. Functionally, may function in recognizing stalled ribosomes, interact with stem-loop structures in stalled mRNA molecules, and effect endonucleolytic cleavage of the mRNA. May play a role in the release non-functional ribosomes and degradation of damaged mRNAs. Has endoribonuclease activity. This is Protein pelota homolog from Methanosarcina mazei (strain ATCC BAA-159 / DSM 3647 / Goe1 / Go1 / JCM 11833 / OCM 88) (Methanosarcina frisia).